The sequence spans 149 residues: Endoribonuclease YbeY (149 aa).

Zn(2+) contacts are provided by H112, H116, and H122.

The protein belongs to the endoribonuclease YbeY family. The cofactor is Zn(2+).

The protein localises to the cytoplasm. Single strand-specific metallo-endoribonuclease involved in late-stage 70S ribosome quality control and in maturation of the 3' terminus of the 16S rRNA. In Methylibium petroleiphilum (strain ATCC BAA-1232 / LMG 22953 / PM1), this protein is Endoribonuclease YbeY.